Consider the following 231-residue polypeptide: Probable transglycosylase SceD (231 aa).

Residues M1–A27 form the signal peptide. Over residues A106 to E116 the composition is skewed to polar residues. The tract at residues A106 to V153 is disordered. Residues A119–Q137 show a composition bias toward low complexity. Polar residues predominate over residues V138–V153.

It belongs to the transglycosylase family. SceD subfamily.

The protein resides in the secreted. In terms of biological role, is able to cleave peptidoglycan and affects clumping and separation of bacterial cells. In Staphylococcus aureus (strain USA300), this protein is Probable transglycosylase SceD (sceD).